The chain runs to 318 residues: Nucleotide-binding protein Jann_0539 (318 aa).

17–24 (GPSGAGRS) lines the ATP pocket. 64 to 67 (DPRT) is a GTP binding site. The segment at 278–318 (GWQVSKRHRDVDKDASENSDRDRGASARTAASTDDGEAEQP) is disordered. Residues 286 to 302 (RDVDKDASENSDRDRGA) show a composition bias toward basic and acidic residues.

The protein belongs to the RapZ-like family.

In terms of biological role, displays ATPase and GTPase activities. The polypeptide is Nucleotide-binding protein Jann_0539 (Jannaschia sp. (strain CCS1)).